Reading from the N-terminus, the 248-residue chain is Proteasome subunit alpha type-1 (248 aa).

The protein belongs to the peptidase T1A family. The 26S proteasome consists of a 20S proteasome core and two 19S regulatory subunits. The 20S proteasome core is composed of 28 subunits that are arranged in four stacked rings, resulting in a barrel-shaped structure. The two end rings are each formed by seven alpha subunits, and the two central rings are each formed by seven beta subunits. The catalytic chamber with the active sites is on the inside of the barrel.

It is found in the cytoplasm. Its subcellular location is the nucleus. Functionally, the proteasome is a multicatalytic proteinase complex which is characterized by its ability to cleave peptides with Arg, Phe, Tyr, Leu, and Glu adjacent to the leaving group at neutral or slightly basic pH. The proteasome has an ATP-dependent proteolytic activity. This is Proteasome subunit alpha type-1 (psmA1) from Dictyostelium discoideum (Social amoeba).